The primary structure comprises 1074 residues: MGKRKKNDESSSSSSQKPCVSSSSDDFSVSFVRAEEDDVATTIRDKTASLKSNATHFSAASAAKGGMFDFRCCRSLFSRRRVLHSRTVRVGYGPVGHDANVTFTPNTVCNQKYNIFSFVPIVLFQQFKFFLNLYFLLMACSQFIPAIQIGAPITYWGPLGFVLTITLIREAFDDFVRYLRDRDLNSEKYEKLTRDGTRIEIRSADIEVGDVIIMHKDRRVPADVVLLRTTDKSGACFIRTDQLDGETDWKLRIPVPHTQHLPNEADIMELNCEVYAEKPQKDIHAFVGTLKITDDDNVQDGSLNVENVLWANTVVASGTAVGIVVYTGRETRSVMNTTLPESKVGLLDLEVNNLTKLLFCFVLVLSSVMVAMKGLDNLWYRYLMRFILLFSYIIPISLRVNLDMAKLFYSWQIGRDKHIPETVIRSSTIPEELGRISFLLSDKTGTLTKNEMHFKKIHLGTVAFSSDAFEEVGQHVRSAYAGRLAKHSFSAKLQNAVEAIALCHNVTPIFENGEISYQAASPDEVALVKWTETVGVRLASRDLHAMSLSVQLPNGQTLMKQFQILYVFPFTSETKRMGIIVKDETTDEVTLLMKGADTVMSGMVQYNDWLDEECSNMAREGLRTLVVARKPLSQAELEAFDRAYHAAKMSISDRSQNMANVVNRMLERDLQLLCLTGVEDRLQDQVTTSLELLRNAGIKIWMLTGDKLETAICIAKSSGLFSRSDNIHVFGNVHNRTDAHNELNNLRRKTDVALVMPGSALNVCLQYYEAEVAELVCACTAVVCCRCSPEQKAQIVQLLRKYRAPLRVAAIGDGGNDVSMIQAAHAGIGIDANEGKQASLAADFSITQFSHVCRLLLVHGRFCYKRSCALSQFVMHRGLIISTMQAIFSCVFYFASVSLYQGVLMVAYSTCYTMLPVFSLVVDRDVTATNALTYPELYKELGKGRSLSYKTFCIWVLISLYQGAVIMYGALLVFDADFIHVVSISFSALIVTELIMVAMTVHTWHWAMLLAQALSLGLYMISLILFDQYFDRQFVLSWVFISKTTAITAVSCLPLYIVKALRRKFSPPSYAKVN.

The disordered stretch occupies residues 1-26; it reads MGKRKKNDESSSSSSQKPCVSSSSDD. Low complexity predominate over residues 10–26; sequence SSSSSSQKPCVSSSSDD. 4 helical membrane passes run 118 to 138, 143 to 163, 354 to 374, and 378 to 398; these read FVPI…FLLM, FIPA…GFVL, LTKL…AMKG, and LWYR…PISL. Catalysis depends on Asp442, which acts as the 4-aspartylphosphate intermediate. Asp442, Lys443, Thr444, Glu524, Phe570, Lys575, Lys594, Arg623, Thr624, Thr704, Gly705, Asp706, Arg786, and Lys792 together coordinate ATP. A Mg(2+)-binding site is contributed by Asp442. A Mg(2+)-binding site is contributed by Thr444. Asp813 contacts Mg(2+). The ATP site is built by Asn816 and Asp817. Asp817 lines the Mg(2+) pocket. 5 helical membrane passes run 886–906, 954–974, 978–998, 1006–1026, and 1038–1058; these read AIFS…VLMV, IWVL…LLVF, FIHV…IMVA, WAML…LILF, and WVFI…LYIV.

It belongs to the cation transport ATPase (P-type) (TC 3.A.3) family. Type IV subfamily. Mg(2+) serves as cofactor.

It is found in the cell membrane. The enzyme catalyses ATP + H2O + phospholipidSide 1 = ADP + phosphate + phospholipidSide 2.. Plays a role in regulating membrane trafficking of cargo proteins during embryogenesis. Regulates snx-3 retromer-mediated endosomal sorting of mig-14, a transporter of Wnt egl-20 morphogen. Together with mon-2 and pad-1, may participate in the formation of endosomal carriers that direct mig-14 trafficking back to Golgi, away from lysosomal degradation. Required for Wnt egl-20 gradient formation along the anteroposterior body axis and migration of QL neuroblast descendants toward the posterior part. Maintains phosphatidylethanolamine (PE) asymmetry at the cell membrane and prevents the budding of ectosome vesicles that affect intercellular communication and morphogenesis. The sequence is that of Probable phospholipid-transporting ATPase tat-5 (tat-5) from Caenorhabditis elegans.